The chain runs to 469 residues: Ufm1-specific protease 2 (469 aa).

Position 1 is an N-acetylmethionine (M1). Residues C302, D426, and H428 contribute to the active site.

Belongs to the peptidase C78 family. As to expression, expressed in brain.

It localises to the endoplasmic reticulum. It is found in the cytoplasm. The protein resides in the nucleus. In terms of biological role, thiol-dependent isopeptidase that specifically cleaves UFM1, a ubiquitin-like modifier protein, from conjugated proteins, such as CD274/PD-L1, CYB5R3, DDRGK1, MRE11, RPL26/uL24, TRIP4 and RPL26/uL24. While it is also able to mediate the processing of UFM1 precursors, a prerequisite for conjugation reactions, UFSP2 mainly acts as a protein deUFMylase that mediates deconjugation of UFM1 from target proteins. Mediates deUFMylation of RPL26/uL24, a critical step to release the UFM1 ribosome E3 ligase (UREL) complex during the recycling of 60S ribosome subunits from the endoplasmic reticulum. Catalyzes deUFMylation of TRIP4, regulating intracellular nuclear receptors transactivation and thereby regulate cell proliferation and differentiation. This chain is Ufm1-specific protease 2, found in Homo sapiens (Human).